Consider the following 440-residue polypeptide: Transposon Ty1-A Gag polyprotein (440 aa).

Composition is skewed to polar residues over residues 1 to 23, 48 to 60, 71 to 93, and 127 to 152; these read MESQ…SVTS, TKAN…TPAS, SPQT…MMTQ, and QSQF…GNTF. Disordered regions lie at residues 1–93, 126–173, and 352–440; these read MESQ…MMTQ, PQSQ…RPPP, and GSRN…PETY. Low complexity predominate over residues 153–165; sequence TDSSSADSDMTST. Residues 299–401 are RNA-binding; sequence NNGIHINNKV…NSKSKTARAH (103 aa). A compositionally biased stretch (low complexity) spans 402-418; the sequence is NVSTSNNSPSTDNDSIS. At Ser-416 the chain carries Phosphoserine. A compositionally biased stretch (polar residues) spans 419–428; the sequence is KSTTEPIQLN. Over residues 429-440 the composition is skewed to basic and acidic residues; sequence NKHDLHLRPETY.

In terms of assembly, homotrimer.

It localises to the cytoplasm. Capsid protein (CA) is the structural component of the virus-like particle (VLP), forming the shell that encapsulates the retrotransposons dimeric RNA genome. The particles are assembled from trimer-clustered units and there are holes in the capsid shells that allow for the diffusion of macromolecules. CA also has nucleocapsid-like chaperone activity, promoting primer tRNA(i)-Met annealing to the multipartite primer-binding site (PBS), dimerization of Ty1 RNA and initiation of reverse transcription. The chain is Transposon Ty1-A Gag polyprotein (TY1A-A) from Saccharomyces cerevisiae (strain ATCC 204508 / S288c) (Baker's yeast).